The primary structure comprises 354 residues: MNGTEGPDFYVPMVNTTGIVRSPYDYPQYYLVNPAAFSMLAAYMFFLILVGFPVNFLTLYVTMEHKKLRTPLNYILLNLAVANLFMVIGGFTTTMYTSMHGYFVLGRTGCNLEGFFATLGGEIALWSLVVLAVERWVVVCKPISNFRFGENHAVMGVSFTWLMACACSVPPLFGWSRYIPEGMQCSCGIDYYTRAPGYNNESFVIYMFVCHFSIPLTIIFFCYGRLLCAVKDAAAAQQESETTQRAEREVSRMVVIMVIGFLICWLPYASVAWFIFTHQGSEFGPVFMTIPAFFAKSSAIYNPMIYICMNKQFRHCMITTLCCGKNPFEEEEGASTTASKTEASSVSSSHVSPA.

The Extracellular portion of the chain corresponds to Met1 to Ala36. N-linked (GlcNAc...) asparagine glycosylation is found at Asn2 and Asn15. The helical transmembrane segment at Phe37–Val61 threads the bilayer. Residues Thr62–Asn73 are Cytoplasmic-facing. A helical transmembrane segment spans residues Tyr74–Tyr96. The Extracellular portion of the chain corresponds to Thr97–Cys110. Cys110 and Cys187 are oxidised to a cystine. The chain crosses the membrane as a helical span at residues Asn111–Val133. The short motif at Glu134–Trp136 is the 'Ionic lock' involved in activated form stabilization element. Residues Glu134 to His152 lie on the Cytoplasmic side of the membrane. Residues Ala153–Phe173 form a helical membrane-spanning segment. The Extracellular segment spans residues Gly174–Ser202. A helical membrane pass occupies residues Phe203–Gly224. At Arg225–Arg252 the chain is on the cytoplasmic side. A helical membrane pass occupies residues Met253–Phe274. Residues Ile275–Val286 are Extracellular-facing. A helical membrane pass occupies residues Phe287–Cys308. At Lys296 the chain carries N6-(retinylidene)lysine. At Met309–Ala354 the chain is on the cytoplasmic side. S-palmitoyl cysteine attachment occurs at residues Cys322 and Cys323. The segment at Gly333 to Ala354 is disordered. Residues Ala334 to Ala354 are compositionally biased toward low complexity.

It belongs to the G-protein coupled receptor 1 family. Opsin subfamily. In terms of processing, phosphorylated on some or all of the serine and threonine residues present in the C-terminal region. Contains one covalently linked retinal chromophore.

The protein resides in the membrane. The protein localises to the cell projection. It localises to the cilium. Its subcellular location is the photoreceptor outer segment. Photoreceptor required for image-forming vision at low light intensity. While most salt water fish species use retinal as chromophore, most freshwater fish use 3-dehydroretinal, or a mixture of retinal and 3-dehydroretinal. Light-induced isomerization of 11-cis to all-trans retinal triggers a conformational change that activates signaling via G-proteins. Subsequent receptor phosphorylation mediates displacement of the bound G-protein alpha subunit by arrestin and terminates signaling. The sequence is that of Rhodopsin (rho) from Zeus faber (John Dory).